The primary structure comprises 236 residues: Purine nucleoside phosphorylase DeoD-type 2 (236 aa).

H5 is an a purine D-ribonucleoside binding site. Residues G21, R25, R44, and 88–91 (RIGS) contribute to the phosphate site. A purine D-ribonucleoside is bound by residues 180–182 (DME) and 204–205 (SD). The active-site Proton donor is D205.

Belongs to the PNP/UDP phosphorylase family. As to quaternary structure, homohexamer; trimer of homodimers.

It carries out the reaction a purine D-ribonucleoside + phosphate = a purine nucleobase + alpha-D-ribose 1-phosphate. The enzyme catalyses a purine 2'-deoxy-D-ribonucleoside + phosphate = a purine nucleobase + 2-deoxy-alpha-D-ribose 1-phosphate. Catalyzes the reversible phosphorolytic breakdown of the N-glycosidic bond in the beta-(deoxy)ribonucleoside molecules, with the formation of the corresponding free purine bases and pentose-1-phosphate. This Vibrio cholerae serotype O1 (strain ATCC 39315 / El Tor Inaba N16961) protein is Purine nucleoside phosphorylase DeoD-type 2.